The following is a 446-amino-acid chain: UDP-N-acetylmuramate--L-alanine ligase (446 aa).

Residue 122–128 (GTHGKTT) participates in ATP binding.

This sequence belongs to the MurCDEF family.

Its subcellular location is the cytoplasm. It carries out the reaction UDP-N-acetyl-alpha-D-muramate + L-alanine + ATP = UDP-N-acetyl-alpha-D-muramoyl-L-alanine + ADP + phosphate + H(+). The protein operates within cell wall biogenesis; peptidoglycan biosynthesis. Cell wall formation. The sequence is that of UDP-N-acetylmuramate--L-alanine ligase from Nocardioides sp. (strain ATCC BAA-499 / JS614).